A 317-amino-acid polypeptide reads, in one-letter code: MNMLEETLETIKAYVALTKPRVIELLLVATIPAMLQAERGENNIGLILLTLLGGWMGAAAANTFNMVADSDIDQKMGRTRARPLVRNKVSNRHASVFAWTLTVVSFLWLWVLCRSVLAGLFILLTIFFYIFVYTKYLKRKTHLNIVWGGAAGCMPVVVGWAVITDNLPAGTPAQWWQAIVLFMVIFFWTPPHTWALAMKYKDDYARAGVPMLPVVRTPVEVTRQIVWYTVATVLTTFLLIPAASWIHAIIAVVSGVWFLVMAVRLHNGIKNGGEVKPLKLFILSNNYLAVYFVGLSIDAVLGWETIGGHLGWTTTFF.

8 helical membrane passes run 44–64, 93–113, 116–136, 143–163, 178–198, 221–241, 243–263, and 288–308; these read IGLI…ANTF, HASV…WVLC, VLAG…YTKY, LNIV…WAVI, AIVL…ALAM, VTRQ…LLIP, ASWI…VMAV, and LAVY…TIGG.

It belongs to the UbiA prenyltransferase family. Protoheme IX farnesyltransferase subfamily.

The protein localises to the cell membrane. It carries out the reaction heme b + (2E,6E)-farnesyl diphosphate + H2O = Fe(II)-heme o + diphosphate. Its pathway is porphyrin-containing compound metabolism; heme O biosynthesis; heme O from protoheme: step 1/1. In terms of biological role, converts heme B (protoheme IX) to heme O by substitution of the vinyl group on carbon 2 of heme B porphyrin ring with a hydroxyethyl farnesyl side group. The polypeptide is Protoheme IX farnesyltransferase (Corynebacterium diphtheriae (strain ATCC 700971 / NCTC 13129 / Biotype gravis)).